The sequence spans 469 residues: Histone chaperone rtt-106 (469 aa).

2 disordered regions span residues 54–73 and 364–469; these read EEPATKRRRVEAQTSGPNGA and MAEQ…EGEE. 2 stretches are compositionally biased toward basic and acidic residues: residues 364–379 and 402–415; these read MAEQRKAKKQLAENAK and ELERAQKEEEQRLQ. Composition is skewed to acidic residues over residues 416-433 and 440-469; these read DEEDEEEEDYDPGSEGES and SEEEEEEEDGEGEGDEDDDEDMGEGLEGEE.

Belongs to the RTT106 family. Interacts with histones H3 and H4.

It is found in the nucleus. It localises to the chromosome. Histones H3 and H4 chaperone involved in the nucleosome formation and heterochromatin silencing. Required for the deposition of H3K56ac-carrying H3-H4 complex onto newly-replicated DNA. Plays a role in the transcriptional regulation of the cell-cycle dependent histone genes by creating a repressive structure at the core histone gene promoter. The polypeptide is Histone chaperone rtt-106 (rtt-106) (Neurospora crassa (strain ATCC 24698 / 74-OR23-1A / CBS 708.71 / DSM 1257 / FGSC 987)).